Here is a 501-residue protein sequence, read N- to C-terminus: Tegument protein US24 (501 aa).

Belongs to the herpesviridae US22 family.

Its subcellular location is the virion tegument. The protein is Tegument protein US24 (US24) of Human cytomegalovirus (strain AD169) (HHV-5).